Consider the following 321-residue polypeptide: 4-hydroxy-3-methylbut-2-enyl diphosphate reductase (321 aa).

A [4Fe-4S] cluster-binding site is contributed by Cys12. Residues His41 and His74 each coordinate (2E)-4-hydroxy-3-methylbut-2-enyl diphosphate. Residues His41 and His74 each coordinate dimethylallyl diphosphate. Isopentenyl diphosphate-binding residues include His41 and His74. Cys96 provides a ligand contact to [4Fe-4S] cluster. His124 is a (2E)-4-hydroxy-3-methylbut-2-enyl diphosphate binding site. Position 124 (His124) interacts with dimethylallyl diphosphate. Isopentenyl diphosphate is bound at residue His124. Glu126 (proton donor) is an active-site residue. Thr167 contacts (2E)-4-hydroxy-3-methylbut-2-enyl diphosphate. Cys197 contacts [4Fe-4S] cluster. Ser225, Ser226, Asn227, and Ser269 together coordinate (2E)-4-hydroxy-3-methylbut-2-enyl diphosphate. Dimethylallyl diphosphate contacts are provided by Ser225, Ser226, Asn227, and Ser269. Ser225, Ser226, Asn227, and Ser269 together coordinate isopentenyl diphosphate.

This sequence belongs to the IspH family. As to quaternary structure, homodimer. The cofactor is [4Fe-4S] cluster.

The enzyme catalyses isopentenyl diphosphate + 2 oxidized [2Fe-2S]-[ferredoxin] + H2O = (2E)-4-hydroxy-3-methylbut-2-enyl diphosphate + 2 reduced [2Fe-2S]-[ferredoxin] + 2 H(+). It carries out the reaction dimethylallyl diphosphate + 2 oxidized [2Fe-2S]-[ferredoxin] + H2O = (2E)-4-hydroxy-3-methylbut-2-enyl diphosphate + 2 reduced [2Fe-2S]-[ferredoxin] + 2 H(+). The protein operates within isoprenoid biosynthesis; dimethylallyl diphosphate biosynthesis; dimethylallyl diphosphate from (2E)-4-hydroxy-3-methylbutenyl diphosphate: step 1/1. Its pathway is isoprenoid biosynthesis; isopentenyl diphosphate biosynthesis via DXP pathway; isopentenyl diphosphate from 1-deoxy-D-xylulose 5-phosphate: step 6/6. Its function is as follows. Catalyzes the conversion of 1-hydroxy-2-methyl-2-(E)-butenyl 4-diphosphate (HMBPP) into a mixture of isopentenyl diphosphate (IPP) and dimethylallyl diphosphate (DMAPP). Acts in the terminal step of the DOXP/MEP pathway for isoprenoid precursor biosynthesis. The protein is 4-hydroxy-3-methylbut-2-enyl diphosphate reductase of Escherichia coli O6:K15:H31 (strain 536 / UPEC).